We begin with the raw amino-acid sequence, 362 residues long: S-adenosylmethionine-dependent nucleotide dehydratase RSAD2 (362 aa).

Residues 47–73 form a disordered region; sequence EQPQVRGEPEDTQETQEDGNSTQPTTP. Positions 64 to 73 are enriched in polar residues; the sequence is DGNSTQPTTP. Residues 70–290 enclose the Radical SAM core domain; that stretch reads PTTPVSVNYH…LERHKEVSCL (221 aa). [4Fe-4S] cluster-binding residues include Cys-84, Cys-88, and Cys-91. Lys-198 bears the N6-acetyllysine mark. Lys-207 participates in a covalent cross-link: Glycyl lysine isopeptide (Lys-Gly) (interchain with G-Cter in ubiquitin).

It belongs to the radical SAM superfamily. RSAD2 family. As to quaternary structure, homodimer. Interacts with IRAK1 and TRAF6. Interacts with FPPS. Interacts with HADHB. Interacts (via C-terminus) with VAPA/VAP33 (via C-terminus). Requires [4Fe-4S] cluster as cofactor. Acetylated by HAT1. HAT1-mediated acetylation of Lys-198 in turn recruits UBE4A that stimulates RSAD2 polyubiquitination leading to proteasomal degradation. In terms of processing, 'Lys-6'-linked polyubiquitination at Lys-207 leads to RSAD2 protein degradation. Expressed at higher levels in atherosclerotic arteries than in normal arteries.

The protein localises to the endoplasmic reticulum membrane. Its subcellular location is the golgi apparatus. It localises to the endoplasmic reticulum. It is found in the lipid droplet. The protein resides in the mitochondrion. The protein localises to the mitochondrion inner membrane. Its subcellular location is the mitochondrion outer membrane. The catalysed reaction is CTP + AH2 + S-adenosyl-L-methionine = 3'-deoxy-3',4'-didehydro-CTP + 5'-deoxyadenosine + L-methionine + A + H2O + H(+). With respect to regulation, IRAK1 and TRAF6 synergistically activate RSAD2 increasing its activity with CTP as substrate about 10-fold. Functionally, interferon-inducible antiviral protein which plays a major role in the cell antiviral state induced by type I and type II interferon. Catalyzes the conversion of cytidine triphosphate (CTP) to 3'-deoxy-3',4'-didehydro-CTP (ddhCTP) via a SAM-dependent radical mechanism. In turn, ddhCTP acts as a chain terminator for the RNA-dependent RNA polymerases from multiple viruses and directly inhibits viral replication. Therefore, inhibits a wide range of DNA and RNA viruses. Also promotes TLR7 and TLR9-dependent production of IFN-beta production in plasmacytoid dendritic cells (pDCs) by facilitating 'Lys-63'-linked ubiquitination of IRAK1 by TRAF6. Plays a role in CD4+ T-cells activation and differentiation. Facilitates T-cell receptor (TCR)-mediated GATA3 activation and optimal T-helper 2 (Th2) cytokine production by modulating NFKB1 and JUNB activities. Can inhibit secretion of soluble proteins. The polypeptide is S-adenosylmethionine-dependent nucleotide dehydratase RSAD2 (Mus musculus (Mouse)).